The primary structure comprises 660 residues: Acetyl-coenzyme A synthetase (660 aa).

CoA is bound by residues 197–200 (RGGK) and threonine 317. ATP contacts are provided by residues 397–399 (GEP), 421–426 (DTWWQT), aspartate 512, and arginine 528. Position 536 (serine 536) interacts with CoA. Arginine 539 is a binding site for ATP. Residues valine 550, histidine 552, and valine 555 each contribute to the Mg(2+) site. Lysine 625 bears the N6-acetyllysine mark.

This sequence belongs to the ATP-dependent AMP-binding enzyme family. Requires Mg(2+) as cofactor. Acetylated. Deacetylation by the SIR2-homolog deacetylase activates the enzyme.

It catalyses the reaction acetate + ATP + CoA = acetyl-CoA + AMP + diphosphate. Functionally, catalyzes the conversion of acetate into acetyl-CoA (AcCoA), an essential intermediate at the junction of anabolic and catabolic pathways. AcsA undergoes a two-step reaction. In the first half reaction, AcsA combines acetate with ATP to form acetyl-adenylate (AcAMP) intermediate. In the second half reaction, it can then transfer the acetyl group from AcAMP to the sulfhydryl group of CoA, forming the product AcCoA. This is Acetyl-coenzyme A synthetase from Burkholderia mallei (strain NCTC 10247).